Here is a 228-residue protein sequence, read N- to C-terminus: Ribonuclease 3 1 (228 aa).

The region spanning 1 to 124 is the RNase III domain; that stretch reads MYKLLMFRDD…VIGAYYLDNN (124 aa). Position 37 (glutamate 37) interacts with Mg(2+). Aspartate 41 is a catalytic residue. 2 residues coordinate Mg(2+): serine 110 and glutamate 113. Glutamate 113 is a catalytic residue. Positions 153 to 223 constitute a DRBM domain; that stretch reads DSKNRFQEWV…AENALANLNK (71 aa).

This sequence belongs to the ribonuclease III family. Homodimer. Requires Mg(2+) as cofactor.

The protein localises to the cytoplasm. It carries out the reaction Endonucleolytic cleavage to 5'-phosphomonoester.. Digests double-stranded RNA. Involved in the processing of primary rRNA transcript to yield the immediate precursors to the large and small rRNAs (23S and 16S). Processes some mRNAs, and tRNAs when they are encoded in the rRNA operon. Processes pre-crRNA and tracrRNA of type II CRISPR loci if present in the organism. This chain is Ribonuclease 3 1, found in Nostoc sp. (strain PCC 7120 / SAG 25.82 / UTEX 2576).